A 380-amino-acid chain; its full sequence is Chaperone protein DnaJ (380 aa).

Positions 5–70 (DFYDVLGVNR…QKRAAYDQYG (66 aa)) constitute a J domain. The segment at 139–217 (GCEKQIRIPT…CHGAGRVKSQ (79 aa)) adopts a CR-type zinc-finger fold. The Zn(2+) site is built by C152, C155, C169, C172, C191, C194, C205, and C208. CXXCXGXG motif repeat units follow at residues 152-159 (CSHCHGSG), 169-176 (CPTCGGAG), 191-198 (CPTCHGSG), and 205-212 (CNICHGAG).

Belongs to the DnaJ family. In terms of assembly, homodimer. Zn(2+) serves as cofactor.

Its subcellular location is the cytoplasm. Its function is as follows. Participates actively in the response to hyperosmotic and heat shock by preventing the aggregation of stress-denatured proteins and by disaggregating proteins, also in an autonomous, DnaK-independent fashion. Unfolded proteins bind initially to DnaJ; upon interaction with the DnaJ-bound protein, DnaK hydrolyzes its bound ATP, resulting in the formation of a stable complex. GrpE releases ADP from DnaK; ATP binding to DnaK triggers the release of the substrate protein, thus completing the reaction cycle. Several rounds of ATP-dependent interactions between DnaJ, DnaK and GrpE are required for fully efficient folding. Also involved, together with DnaK and GrpE, in the DNA replication of plasmids through activation of initiation proteins. The sequence is that of Chaperone protein DnaJ from Laribacter hongkongensis (strain HLHK9).